A 213-amino-acid polypeptide reads, in one-letter code: Protein nullo (213 aa).

In terms of tissue distribution, blastoderm. Throughout the entire cortex of the embryo although the distribution is not uniform.

In terms of biological role, actin-myosin network stability during cellularization. Might be involved in increasing actin-actin interactions or membrane-to-cytoskeleton attachments. nullo together with Sry-a and bnk may provide auxiliary functions, by acting both to stabilize a large and dynamic microfilament structure and regulate its functions. The chain is Protein nullo (nullo) from Drosophila melanogaster (Fruit fly).